A 270-amino-acid polypeptide reads, in one-letter code: Putative envelope-preserving system protein Rv2743c (270 aa).

2 helical membrane-spanning segments follow: residues 50-72 (ALRW…ALLA) and 77-99 (FTSL…TLLL).

In terms of assembly, interacts with PspA and Rv2742c.

The protein localises to the membrane. Functionally, involved in preservation of envelope integrity and tolerance to surface stress. Reverses the inhibitory effect of PspA on ClgR activity. Facilitates intracellular growth of M.tuberculosis. The sequence is that of Putative envelope-preserving system protein Rv2743c from Mycobacterium tuberculosis (strain ATCC 25618 / H37Rv).